Consider the following 720-residue polypeptide: Ornithine decarboxylase (720 aa).

Lysine 354 carries the N6-(pyridoxal phosphate)lysine modification.

Belongs to the Orn/Lys/Arg decarboxylase class-I family. The cofactor is pyridoxal 5'-phosphate.

It catalyses the reaction L-ornithine + H(+) = putrescine + CO2. The polypeptide is Ornithine decarboxylase (speF) (Haemophilus influenzae (strain ATCC 51907 / DSM 11121 / KW20 / Rd)).